A 398-amino-acid polypeptide reads, in one-letter code: Cysteine protease ATG4A (398 aa).

The active-site Nucleophile is C77. Residues D279 and H281 contribute to the active site. An LIR motif is present at residues 393 to 396; sequence FEIL.

The protein belongs to the peptidase C54 family. As to quaternary structure, interacts with ATG9A; the interaction is direct.

The protein resides in the cytoplasm. The enzyme catalyses [protein]-C-terminal L-amino acid-glycyl-phosphatidylethanolamide + H2O = [protein]-C-terminal L-amino acid-glycine + a 1,2-diacyl-sn-glycero-3-phosphoethanolamine. With respect to regulation, inhibited by N-ethylmaleimide. Redox-regulated during autophagy since reducing conditions activate ATG4A whereas an oxidizing environment such as the presence of H(2)O(2) inhibits its activity. In terms of biological role, cysteine protease that plays a key role in autophagy by mediating both proteolytic activation and delipidation of ATG8 family proteins. The protease activity is required for proteolytic activation of ATG8 family proteins: cleaves the C-terminal amino acid of ATG8 proteins to reveal a C-terminal glycine. Exposure of the glycine at the C-terminus is essential for ATG8 proteins conjugation to phosphatidylethanolamine (PE) and insertion to membranes, which is necessary for autophagy. Preferred substrate is GABARAPL2 followed by MAP1LC3A and GABARAP. Protease activity is also required to counteract formation of high-molecular weight conjugates of ATG8 proteins (ATG8ylation): acts as a deubiquitinating-like enzyme that removes ATG8 conjugated to other proteins, such as ATG3. In addition to the protease activity, also mediates delipidation of ATG8 family proteins. Catalyzes delipidation of PE-conjugated forms of ATG8 proteins during macroautophagy. Compared to ATG4B, the major protein for proteolytic activation of ATG8 proteins, shows weaker ability to cleave the C-terminal amino acid of ATG8 proteins, while it displays stronger delipidation activity. Involved in phagophore growth during mitophagy independently of its protease activity and of ATG8 proteins: acts by regulating ATG9A trafficking to mitochondria and promoting phagophore-endoplasmic reticulum contacts during the lipid transfer phase of mitophagy. The polypeptide is Cysteine protease ATG4A (Homo sapiens (Human)).